The primary structure comprises 723 residues: Aspartate--tRNA(Asp/Asn) ligase 1 (723 aa).

Glu206 lines the L-aspartate pocket. The interval 230–233 is aspartate; it reads QLFK. An L-aspartate-binding site is contributed by Arg252. ATP-binding positions include 252–254 and Gln261; that span reads RDE. L-aspartate is bound at residue His481. Glu516 provides a ligand contact to ATP. Arg523 contacts L-aspartate. 568–571 provides a ligand contact to ATP; the sequence is GMDR.

The protein belongs to the class-II aminoacyl-tRNA synthetase family. Type 1 subfamily. In terms of assembly, homodimer.

It localises to the cytoplasm. It catalyses the reaction tRNA(Asx) + L-aspartate + ATP = L-aspartyl-tRNA(Asx) + AMP + diphosphate. Functionally, aspartyl-tRNA synthetase with relaxed tRNA specificity since it is able to aspartylate not only its cognate tRNA(Asp) but also tRNA(Asn). Reaction proceeds in two steps: L-aspartate is first activated by ATP to form Asp-AMP and then transferred to the acceptor end of tRNA(Asp/Asn). The sequence is that of Aspartate--tRNA(Asp/Asn) ligase 1 from Syntrophus aciditrophicus (strain SB).